The chain runs to 229 residues: Cytidylate kinase (229 aa).

10–18 (GPAGSGKST) contributes to the ATP binding site.

This sequence belongs to the cytidylate kinase family. Type 1 subfamily.

Its subcellular location is the cytoplasm. It carries out the reaction CMP + ATP = CDP + ADP. It catalyses the reaction dCMP + ATP = dCDP + ADP. The protein is Cytidylate kinase of Leptospira interrogans serogroup Icterohaemorrhagiae serovar Lai (strain 56601).